The sequence spans 242 residues: Octanoyltransferase (242 aa).

The 176-residue stretch at 31–206 (SQTTDEIWFL…LFLKNFGYNQ (176 aa)) folds into the BPL/LPL catalytic domain. Substrate contacts are provided by residues 70-77 (RGGQVTYH), 137-139 (SIG), and 150-152 (GLA). The Acyl-thioester intermediate role is filled by Cys168.

It belongs to the LipB family.

The protein localises to the cytoplasm. The enzyme catalyses octanoyl-[ACP] + L-lysyl-[protein] = N(6)-octanoyl-L-lysyl-[protein] + holo-[ACP] + H(+). It functions in the pathway protein modification; protein lipoylation via endogenous pathway; protein N(6)-(lipoyl)lysine from octanoyl-[acyl-carrier-protein]: step 1/2. Its function is as follows. Catalyzes the transfer of endogenously produced octanoic acid from octanoyl-acyl-carrier-protein onto the lipoyl domains of lipoate-dependent enzymes. Lipoyl-ACP can also act as a substrate although octanoyl-ACP is likely to be the physiological substrate. The protein is Octanoyltransferase of Coxiella burnetii (strain Dugway 5J108-111).